Consider the following 224-residue polypeptide: Uracil phosphoribosyltransferase (224 aa).

Arg-92 serves as a coordination point for 5-phospho-alpha-D-ribose 1-diphosphate. Lys-109 is a GTP binding site. Residues Arg-117 and 145–153 contribute to the 5-phospho-alpha-D-ribose 1-diphosphate site; that span reads DPMLATGGT. Uracil contacts are provided by residues Ile-210 and 215 to 217; that span reads GDA. Asp-216 is a binding site for 5-phospho-alpha-D-ribose 1-diphosphate.

This sequence belongs to the UPRTase family. It depends on Mg(2+) as a cofactor.

It carries out the reaction UMP + diphosphate = 5-phospho-alpha-D-ribose 1-diphosphate + uracil. It participates in pyrimidine metabolism; UMP biosynthesis via salvage pathway; UMP from uracil: step 1/1. With respect to regulation, allosterically activated by GTP. Functionally, catalyzes the conversion of uracil and 5-phospho-alpha-D-ribose 1-diphosphate (PRPP) to UMP and diphosphate. In Nicotiana tabacum (Common tobacco), this protein is Uracil phosphoribosyltransferase (UPP).